Consider the following 154-residue polypeptide: Superoxide dismutase [Cu-Zn] (154 aa).

Cu cation-binding residues include H47, H49, and H64. A disulfide bond links C58 and C147. 4 residues coordinate Zn(2+): H64, H72, H81, and D84. Cu cation is bound at residue H121. The segment covering 124-137 (TDDLGRGDSEESKK) has biased composition (basic and acidic residues). A disordered region spans residues 124–144 (TDDLGRGDSEESKKTGNAGAR). R144 provides a ligand contact to substrate.

It belongs to the Cu-Zn superoxide dismutase family. Homodimer. The cofactor is Cu cation. It depends on Zn(2+) as a cofactor.

Its subcellular location is the cytoplasm. The enzyme catalyses 2 superoxide + 2 H(+) = H2O2 + O2. In terms of biological role, destroys radicals which are normally produced within the cells and which are toxic to biological systems. The sequence is that of Superoxide dismutase [Cu-Zn] (sodA) from Emericella nidulans (strain FGSC A4 / ATCC 38163 / CBS 112.46 / NRRL 194 / M139) (Aspergillus nidulans).